A 1037-amino-acid polypeptide reads, in one-letter code: Presequence protease, mitochondrial (1037 aa).

The N-terminal 15 residues, 1-15 (MWRCGGRQGLGVLRR), are a transit peptide targeting the mitochondrion. His-104 lines the Zn(2+) pocket. Glu-107 (proton acceptor) is an active-site residue. Positions 108 and 205 each coordinate Zn(2+). Cys-119 and Cys-556 are oxidised to a cystine. Lys-759 bears the N6-acetyllysine mark. N6-acetyllysine; alternate is present on Lys-770. An N6-succinyllysine; alternate modification is found at Lys-770. Positions 803 to 834 (IGRSKKERRPVRPHTVEKPVPSSSGGDAHVPH) are disordered. Residues 804-814 (GRSKKERRPVR) are compositionally biased toward basic residues. Lys-849 is modified (N6-succinyllysine). Lys-884 carries the N6-acetyllysine modification. Lys-946 is modified (N6-succinyllysine).

This sequence belongs to the peptidase M16 family. PreP subfamily. In terms of assembly, monomer and homodimer; homodimerization is induced by binding of the substrate. It depends on Zn(2+) as a cofactor. A disulfide bond locks the enzyme in the closed conformation preventing substrate entry into the catalytic chamber.

It localises to the mitochondrion matrix. With respect to regulation, mainly exists in a closed and catalytically competent conformation but a closed-to-open switch allows substrate entry into the catalytic chamber. Substrate binding induces closure and dimerization. A disulfide bond may lock the enzyme in a closed conformation preventing substrate entry into the catalytic chamber, participating in redox regulation of the enzyme. Inhibited by metal-chelating agents. Inhibited by nickel and zinc excess, and slightly activated by manganese. In terms of biological role, metalloendopeptidase of the mitochondrial matrix that functions in peptide cleavage and degradation rather than in protein processing. Has an ATP-independent activity. Specifically cleaves peptides in the range of 5 to 65 residues. Shows a preference for cleavage after small polar residues and before basic residues, but without any positional preference. Degrades the transit peptides of mitochondrial proteins after their cleavage. Also degrades other unstructured peptides. It is also able to degrade amyloid-beta protein 40, one of the peptides produced by APP processing, when it accumulates in mitochondrion. It is a highly efficient protease, at least toward amyloid-beta protein 40. Cleaves that peptide at a specific position and is probably not processive, releasing digested peptides intermediates that can be further cleaved subsequently. It is also able to degrade amyloid-beta protein 42. The sequence is that of Presequence protease, mitochondrial from Pongo abelii (Sumatran orangutan).